Consider the following 348-residue polypeptide: Isopentenyl-diphosphate delta-isomerase (348 aa).

Substrate is bound at residue 11–12; sequence RK. Residues 70 to 72, S100, and N131 contribute to the FMN site; that span reads AMT. 100–102 contacts substrate; that stretch reads SQR. Q165 is a substrate binding site. E166 contacts Mg(2+). FMN-binding positions include K197, T231, 278 to 280, and 299 to 300; these read GIR and AR.

Belongs to the IPP isomerase type 2 family. As to quaternary structure, homooctamer. Dimer of tetramers. It depends on FMN as a cofactor. NADPH is required as a cofactor. Mg(2+) serves as cofactor.

It localises to the cytoplasm. It carries out the reaction isopentenyl diphosphate = dimethylallyl diphosphate. Its function is as follows. Involved in the biosynthesis of isoprenoids. Catalyzes the 1,3-allylic rearrangement of the homoallylic substrate isopentenyl (IPP) to its allylic isomer, dimethylallyl diphosphate (DMAPP). The protein is Isopentenyl-diphosphate delta-isomerase of Mycobacterium marinum (strain ATCC BAA-535 / M).